The sequence spans 96 residues: Small ribosomal subunit protein bS6 (96 aa).

This sequence belongs to the bacterial ribosomal protein bS6 family.

Its function is as follows. Binds together with bS18 to 16S ribosomal RNA. This Bacillus cereus (strain ATCC 10987 / NRS 248) protein is Small ribosomal subunit protein bS6.